The chain runs to 862 residues: Alpha,alpha-trehalose-phosphate synthase [UDP-forming] 5 (862 aa).

Ser5 is subject to Phosphoserine. A Phosphothreonine modification is found at Thr32. Residues 60–546 form a glycosyltransferase region; sequence DRIIIVGNQL…ARSFIQDLER (487 aa).

The protein in the N-terminal section; belongs to the glycosyltransferase 20 family. It in the C-terminal section; belongs to the trehalose phosphatase family. As to quaternary structure, binds to the phosphopeptide-binding site of GRF/14-3-3 and to MBF1c. Post-translationally, both Ser-5 and Thr-32 must be phosphorylated for binding to GRF/14-3-3. Low expression in leaves, stems, flower buds, flowers and siliques.

It catalyses the reaction D-glucose 6-phosphate + UDP-alpha-D-glucose = alpha,alpha-trehalose 6-phosphate + UDP + H(+). The sequence is that of Alpha,alpha-trehalose-phosphate synthase [UDP-forming] 5 (TPS5) from Arabidopsis thaliana (Mouse-ear cress).